A 476-amino-acid polypeptide reads, in one-letter code: MKVTLPDFRRAGVLVVGDVMLDRYWYGPTSRISPEAPVPVVKVDTIEERPGGAANVAMNIASLGAISRLVGLTGIDDAARALTSKLNEVQVRCDFVSVPTHPTITKLRVLSRNQQLIRLDFEEGFDGVDPQPIFERIQQALPQIGALVLSDYAKGALNSVQTMIQLARKAKVPVLIDPKGSDFERYRGATLLTPNLSEFEAVVGHCKNEEELVSRGMKLVADFELSALLVTRSEQGMTLLQPGKPPLHLPTQAQEVFDVTGAGDTVIGVLAAALAAGNSLEESCFLANAAAGVVVGKLGTSTVSPIELENAIRGRAETGFGVMDEQQLKKAVAQARQRGEKVVMTNGIFDILHAGHVSYLANARKLGDRLIVAVNSDASTKRLKGEKRPVNPLDQRMIVLGALEAVDWVVPFEEDTPQRLIADILPDLLVKGGDYKPDEIAGSAEVWAAGGEVKVLNFEDGVSTTNIIQSIKNGLG.

Positions 1-318 (MKVTLPDFRR…ENAIRGRAET (318 aa)) are ribokinase. Position 195 to 198 (195 to 198 (NLSE)) interacts with ATP. Asp-264 is an active-site residue. Residues 344–476 (MTNGIFDILH…IIQSIKNGLG (133 aa)) are cytidylyltransferase.

In the N-terminal section; belongs to the carbohydrate kinase PfkB family. This sequence in the C-terminal section; belongs to the cytidylyltransferase family. As to quaternary structure, homodimer.

The enzyme catalyses D-glycero-beta-D-manno-heptose 7-phosphate + ATP = D-glycero-beta-D-manno-heptose 1,7-bisphosphate + ADP + H(+). It carries out the reaction D-glycero-beta-D-manno-heptose 1-phosphate + ATP + H(+) = ADP-D-glycero-beta-D-manno-heptose + diphosphate. It functions in the pathway nucleotide-sugar biosynthesis; ADP-L-glycero-beta-D-manno-heptose biosynthesis; ADP-L-glycero-beta-D-manno-heptose from D-glycero-beta-D-manno-heptose 7-phosphate: step 1/4. The protein operates within nucleotide-sugar biosynthesis; ADP-L-glycero-beta-D-manno-heptose biosynthesis; ADP-L-glycero-beta-D-manno-heptose from D-glycero-beta-D-manno-heptose 7-phosphate: step 3/4. Catalyzes the phosphorylation of D-glycero-D-manno-heptose 7-phosphate at the C-1 position to selectively form D-glycero-beta-D-manno-heptose-1,7-bisphosphate. Functionally, catalyzes the ADP transfer from ATP to D-glycero-beta-D-manno-heptose 1-phosphate, yielding ADP-D-glycero-beta-D-manno-heptose. This Yersinia enterocolitica serotype O:8 / biotype 1B (strain NCTC 13174 / 8081) protein is Bifunctional protein HldE.